Here is a 203-residue protein sequence, read N- to C-terminus: A-type ATP synthase subunit E (203 aa).

It belongs to the V-ATPase E subunit family. As to quaternary structure, has multiple subunits with at least A(3), B(3), C, D, E, F, H, I and proteolipid K(x).

It is found in the cell membrane. Its function is as follows. Component of the A-type ATP synthase that produces ATP from ADP in the presence of a proton gradient across the membrane. This is A-type ATP synthase subunit E from Methanococcus maripaludis (strain DSM 14266 / JCM 13030 / NBRC 101832 / S2 / LL).